A 293-amino-acid chain; its full sequence is ATP synthase gamma chain (293 aa).

Belongs to the ATPase gamma chain family. As to quaternary structure, F-type ATPases have 2 components, CF(1) - the catalytic core - and CF(0) - the membrane proton channel. CF(1) has five subunits: alpha(3), beta(3), gamma(1), delta(1), epsilon(1). CF(0) has three main subunits: a, b and c.

The protein resides in the cell membrane. Functionally, produces ATP from ADP in the presence of a proton gradient across the membrane. The gamma chain is believed to be important in regulating ATPase activity and the flow of protons through the CF(0) complex. The sequence is that of ATP synthase gamma chain from Streptococcus sanguinis.